We begin with the raw amino-acid sequence, 103 residues long: Histone H4 (103 aa).

Residues 1–14 (MSGRGKGGKGLGKG) show a composition bias toward gly residues. Residues 1-20 (MSGRGKGGKGLGKGGAKRHR) form a disordered region. Ser2 carries the post-translational modification N-acetylserine. Lys17 carries the N6-acetyllysine modification. The DNA-binding element occupies 17-21 (KRHRK). Lys21 bears the N6-methyllysine mark.

Belongs to the histone H4 family. In terms of assembly, the nucleosome is a histone octamer containing two molecules each of H2A, H2B, H3 and H4 assembled in one H3-H4 heterotetramer and two H2A-H2B heterodimers. The octamer wraps approximately 147 bp of DNA.

The protein resides in the nucleus. It localises to the chromosome. Core component of nucleosome. Nucleosomes wrap and compact DNA into chromatin, limiting DNA accessibility to the cellular machineries which require DNA as a template. Histones thereby play a central role in transcription regulation, DNA repair, DNA replication and chromosomal stability. DNA accessibility is regulated via a complex set of post-translational modifications of histones, also called histone code, and nucleosome remodeling. The chain is Histone H4 from Pyrenomonas salina.